The primary structure comprises 106 residues: ATP-dependent Clp protease adapter protein ClpS (106 aa).

This sequence belongs to the ClpS family. In terms of assembly, binds to the N-terminal domain of the chaperone ClpA.

Functionally, involved in the modulation of the specificity of the ClpAP-mediated ATP-dependent protein degradation. This chain is ATP-dependent Clp protease adapter protein ClpS, found in Yersinia pestis bv. Antiqua (strain Antiqua).